A 516-amino-acid chain; its full sequence is D-alanine--D-alanyl carrier protein ligase (516 aa).

T156–S157 is a binding site for ATP. Position 203 (D203) interacts with D-alanine. N298–T303 contributes to the ATP binding site. Position 307 (V307) interacts with D-alanine. Residues D389, Y401–R404, and K503 contribute to the ATP site. D-alanine is bound at residue K503.

Belongs to the ATP-dependent AMP-binding enzyme family. DltA subfamily.

The protein resides in the cytoplasm. The enzyme catalyses holo-[D-alanyl-carrier protein] + D-alanine + ATP = D-alanyl-[D-alanyl-carrier protein] + AMP + diphosphate. It functions in the pathway cell wall biogenesis; lipoteichoic acid biosynthesis. Its function is as follows. Catalyzes the first step in the D-alanylation of lipoteichoic acid (LTA), the activation of D-alanine and its transfer onto the D-alanyl carrier protein (Dcp) DltC. In an ATP-dependent two-step reaction, forms a high energy D-alanyl-AMP intermediate, followed by transfer of the D-alanyl residue as a thiol ester to the phosphopantheinyl prosthetic group of the Dcp. D-alanylation of LTA plays an important role in modulating the properties of the cell wall in Gram-positive bacteria, influencing the net charge of the cell wall. In Streptococcus pneumoniae (strain ATCC 700669 / Spain 23F-1), this protein is D-alanine--D-alanyl carrier protein ligase.